The primary structure comprises 393 residues: L-rhamnonate dehydratase (393 aa).

Residues H22 and R48 each coordinate substrate. Mg(2+) is bound by residues D214, E241, and E269. The Proton acceptor role is filled by H319. E339 lines the substrate pocket.

The protein belongs to the mandelate racemase/muconate lactonizing enzyme family. RhamD subfamily. In terms of assembly, homooctamer; tetramer of dimers. Mg(2+) is required as a cofactor.

It catalyses the reaction L-rhamnonate = 2-dehydro-3-deoxy-L-rhamnonate + H2O. Its function is as follows. Catalyzes the dehydration of L-rhamnonate to 2-keto-3-deoxy-L-rhamnonate (KDR). The chain is L-rhamnonate dehydratase from Azorhizobium caulinodans (strain ATCC 43989 / DSM 5975 / JCM 20966 / LMG 6465 / NBRC 14845 / NCIMB 13405 / ORS 571).